A 209-amino-acid chain; its full sequence is CMRF35-like molecule 7 (209 aa).

Residues 1–17 (MWLSPALLLLSFPGCLS) form the signal peptide. One can recognise an Ig-like V-type domain in the interval 18-120 (IQGPALVRGP…TDRGTRVKVN (103 aa)). Residues 18-157 (IQGPALVRGP…SSDLQKRTYY (140 aa)) lie on the Extracellular side of the membrane. A disulfide bond links cysteine 36 and cysteine 104. An N-linked (GlcNAc...) asparagine glycan is attached at asparagine 97. Residues 158–178 (MLLVFVKVPALLILVGAVLWL) traverse the membrane as a helical segment. Residues 179 to 209 (KRSTQKVPEEQWRHTLCSDLDSELLAKDISP) lie on the Cytoplasmic side of the membrane. Serine 196 carries the phosphoserine modification.

The protein belongs to the CD300 family. In terms of assembly, interacts with TYROBP, which enhances cell surface expression and activation properties. May interact with HCST. N-glycosylated. In terms of tissue distribution, expressed in myeloid cells (at protein level).

It is found in the cell membrane. Acts as an activating immune receptor in mast cells through its interaction with ITAM-bearing adapter TYROBP. The protein is CMRF35-like molecule 7 (Cd300lb) of Mus musculus (Mouse).